Reading from the N-terminus, the 87-residue chain is UPF0147 protein AF_2370.1 (87 aa).

Belongs to the UPF0147 family.

The polypeptide is UPF0147 protein AF_2370.1 (Archaeoglobus fulgidus (strain ATCC 49558 / DSM 4304 / JCM 9628 / NBRC 100126 / VC-16)).